A 327-amino-acid polypeptide reads, in one-letter code: Methionine import ATP-binding protein MetN (327 aa).

One can recognise an ABC transporter domain in the interval 3-239 (VELKNIEKIY…PKHAVTKELL (237 aa)). 36–43 (GYSGAGKS) contributes to the ATP binding site.

This sequence belongs to the ABC transporter superfamily. Methionine importer (TC 3.A.1.24) family. In terms of assembly, the complex is composed of two ATP-binding proteins (MetN), two transmembrane proteins (MetI) and a solute-binding protein (MetQ).

The protein resides in the cell inner membrane. It carries out the reaction L-methionine(out) + ATP + H2O = L-methionine(in) + ADP + phosphate + H(+). The catalysed reaction is D-methionine(out) + ATP + H2O = D-methionine(in) + ADP + phosphate + H(+). In terms of biological role, part of the ABC transporter complex MetNIQ involved in methionine import. Responsible for energy coupling to the transport system. In Helicobacter pylori (strain HPAG1), this protein is Methionine import ATP-binding protein MetN.